The following is a 97-amino-acid chain: ESAT-6-like protein EsxG (97 aa).

At Ser-2 the chain carries N-acetylserine.

It belongs to the WXG100 family. CFP-10 subfamily. Forms a tight 1:1 complex with EsxH.

The protein resides in the secreted. EsxG, in complex with EsxH, disrupts ESCRT function and impairs host phagosome maturation, thereby promoting intracellular bacterial growth. The complex acts by interacting, via EsxH, with the host hepatocyte growth factor-regulated tyrosine kinase substrate (HGS/HRS), a component of the ESCRT machinery. EsxG stabilizes EsxH in the host cytosol. This chain is ESAT-6-like protein EsxG, found in Mycobacterium tuberculosis (strain ATCC 25618 / H37Rv).